The following is a 207-amino-acid chain: Small ribosomal subunit protein uS4A (207 aa).

Residues 98-158 form the S4 RNA-binding domain; it reads TRLDNVAYRL…EKSKSSAKFK (61 aa).

The protein belongs to the universal ribosomal protein uS4 family. Part of the 30S ribosomal subunit. Contacts protein S5. The interaction surface between S4 and S5 is involved in control of translational fidelity.

In terms of biological role, one of the primary rRNA binding proteins, it binds directly to 16S rRNA where it nucleates assembly of the body of the 30S subunit. With S5 and S12 plays an important role in translational accuracy. The protein is Small ribosomal subunit protein uS4A of Alkaliphilus oremlandii (strain OhILAs) (Clostridium oremlandii (strain OhILAs)).